The following is a 282-amino-acid chain: Shikimate dehydrogenase (NADP(+)) (282 aa).

Shikimate-binding positions include 24–26 (SRS) and Thr71. Lys75 (proton acceptor) is an active-site residue. Asp87 contributes to the NADP(+) binding site. Shikimate contacts are provided by Asn96 and Asp112. Residues 138–142 (GAGGA), 162–167 (NRTRIR), and Leu227 each bind NADP(+). Tyr229 is a binding site for shikimate. Gly250 provides a ligand contact to NADP(+).

It belongs to the shikimate dehydrogenase family. As to quaternary structure, homodimer.

It carries out the reaction shikimate + NADP(+) = 3-dehydroshikimate + NADPH + H(+). It participates in metabolic intermediate biosynthesis; chorismate biosynthesis; chorismate from D-erythrose 4-phosphate and phosphoenolpyruvate: step 4/7. In terms of biological role, involved in the biosynthesis of the chorismate, which leads to the biosynthesis of aromatic amino acids. Catalyzes the reversible NADPH linked reduction of 3-dehydroshikimate (DHSA) to yield shikimate (SA). This is Shikimate dehydrogenase (NADP(+)) from Paracoccus denitrificans (strain Pd 1222).